The following is a 61-amino-acid chain: Small ribosomal subunit protein uS14 (61 aa).

Zn(2+) contacts are provided by Cys24, Cys27, Cys40, and Cys43.

Belongs to the universal ribosomal protein uS14 family. Zinc-binding uS14 subfamily. In terms of assembly, part of the 30S ribosomal subunit. Contacts proteins S3 and S10. It depends on Zn(2+) as a cofactor.

Functionally, binds 16S rRNA, required for the assembly of 30S particles and may also be responsible for determining the conformation of the 16S rRNA at the A site. In Dehalococcoides mccartyi (strain ATCC BAA-2266 / KCTC 15142 / 195) (Dehalococcoides ethenogenes (strain 195)), this protein is Small ribosomal subunit protein uS14.